Here is a 207-residue protein sequence, read N- to C-terminus: Thymidylate kinase (207 aa).

G7–S14 provides a ligand contact to ATP.

This sequence belongs to the thymidylate kinase family.

The catalysed reaction is dTMP + ATP = dTDP + ADP. Phosphorylation of dTMP to form dTDP in both de novo and salvage pathways of dTTP synthesis. This Chlamydia caviae (strain ATCC VR-813 / DSM 19441 / 03DC25 / GPIC) (Chlamydophila caviae) protein is Thymidylate kinase.